A 2177-amino-acid chain; its full sequence is Brefeldin A-inhibited guanine nucleotide-exchange protein 3 (2177 aa).

Positions 282 to 295 (TSSTSTSLESDSAS) are enriched in low complexity. Residues 282–301 (TSSTSTSLESDSASPGVSDH) form a disordered region. Ser471 is subject to Phosphoserine. Residues 511–524 (TGQTTLEGELGQTT) show a composition bias toward polar residues. 3 disordered regions span residues 511 to 542 (TGQT…PAIP), 617 to 636 (AAEK…DNCS), and 1031 to 1076 (DGAS…LSTA). One can recognise an SEC7 domain in the interval 583–796 (RTRSYGSRYS…EELYHQVLDR (214 aa)). Residues 618 to 627 (AEKDSGRSDV) show a composition bias toward basic and acidic residues. Residues Ser632 and Ser636 each carry the phosphoserine modification. Over residues 1032 to 1047 (GASQPPLTISQPQKAT) the composition is skewed to polar residues. Ser1049 bears the Phosphoserine mark. A helical membrane pass occupies residues 1492–1512 (GPGFGIYAVVHLLLPVMSVWL). Disordered regions lie at residues 1848–1877 (STDS…GKEK), 1946–2004 (ESST…RKKE), and 2033–2064 (KQQH…SPLL). The segment covering 1960-1974 (TPSEDDRSQSREHMG) has biased composition (basic and acidic residues). Ser1991 is modified (phosphoserine). Composition is skewed to basic and acidic residues over residues 1993–2004 (KVEKKDPSRKKE) and 2043–2052 (KEVKVEKKGE). Phosphoserine occurs at positions 2079, 2081, 2095, 2101, and 2103. The segment at 2082–2103 (AGPELLRQDKRPRSGSTGSSLS) is disordered.

Interacts with PHB2. As to expression, expressed in breast cancer cell lines. Not expressed in normal tissues such as duct, mammary gland, lung, heart, liver, kidnay, bone marrow.

Its subcellular location is the cytoplasm. The protein resides in the cytoplasmic vesicle. It is found in the secretory vesicle. It localises to the secretory vesicle membrane. Its function is as follows. Participates in the regulation of systemic glucose homeostasis, where it negatively regulates insulin granule biogenesis in pancreatic islet beta cells. Also regulates glucagon granule production in pancreatic alpha cells. Inhibits nuclear translocation of the transcriptional coregulator PHB2 and may enhance estrogen receptor alpha (ESR1) transcriptional activity in breast cancer cells. The chain is Brefeldin A-inhibited guanine nucleotide-exchange protein 3 from Homo sapiens (Human).